We begin with the raw amino-acid sequence, 105 residues long: Large ribosomal subunit protein uL24 (105 aa).

It belongs to the universal ribosomal protein uL24 family. As to quaternary structure, part of the 50S ribosomal subunit.

Its function is as follows. One of two assembly initiator proteins, it binds directly to the 5'-end of the 23S rRNA, where it nucleates assembly of the 50S subunit. One of the proteins that surrounds the polypeptide exit tunnel on the outside of the subunit. The sequence is that of Large ribosomal subunit protein uL24 from Nitrosococcus oceani (strain ATCC 19707 / BCRC 17464 / JCM 30415 / NCIMB 11848 / C-107).